Reading from the N-terminus, the 1058-residue chain is Carbamoyl phosphate synthase large chain (1058 aa).

Positions 1–399 (MPIDKDIKKV…AIQKAIRSLD (399 aa)) are carboxyphosphate synthetic domain. Residues arginine 127, arginine 167, glycine 173, glycine 174, glutamate 206, valine 208, glutamate 213, glycine 239, isoleucine 240, histidine 241, glutamine 282, and glutamate 296 each contribute to the ATP site. The 195-residue stretch at 131-325 (GHFMDKLNEP…IAKISSKIAL (195 aa)) folds into the ATP-grasp 1 domain. Glutamine 282, glutamate 296, and asparagine 298 together coordinate Mg(2+). Residues glutamine 282, glutamate 296, and asparagine 298 each contribute to the Mn(2+) site. The segment at 400-538 (MGHDGFEYVE…YSTYDSGNEL (139 aa)) is oligomerization domain. The segment at 539–924 (KSSNKKKIVI…YKSQLAAGMD (386 aa)) is carbamoyl phosphate synthetic domain. The 194-residue stretch at 663–856 (AKLLNKLHIH…LAKVATWIMT (194 aa)) folds into the ATP-grasp 2 domain. Positions 699, 738, 740, 745, 770, 771, 772, 773, 813, and 827 each coordinate ATP. The Mg(2+) site is built by glutamine 813, glutamate 827, and asparagine 829. Positions 813, 827, and 829 each coordinate Mn(2+). Residues 923 to 1058 (MDLPKEGKIF…KSLNEHIDGE (136 aa)) form the MGS-like domain. The allosteric domain stretch occupies residues 925–1058 (LPKEGKIFIS…KSLNEHIDGE (134 aa)).

The protein belongs to the CarB family. As to quaternary structure, composed of two chains; the small (or glutamine) chain promotes the hydrolysis of glutamine to ammonia, which is used by the large (or ammonia) chain to synthesize carbamoyl phosphate. Tetramer of heterodimers (alpha,beta)4. The cofactor is Mg(2+). Mn(2+) serves as cofactor.

It catalyses the reaction hydrogencarbonate + L-glutamine + 2 ATP + H2O = carbamoyl phosphate + L-glutamate + 2 ADP + phosphate + 2 H(+). The catalysed reaction is hydrogencarbonate + NH4(+) + 2 ATP = carbamoyl phosphate + 2 ADP + phosphate + 2 H(+). It functions in the pathway amino-acid biosynthesis; L-arginine biosynthesis; carbamoyl phosphate from bicarbonate: step 1/1. The protein operates within pyrimidine metabolism; UMP biosynthesis via de novo pathway; (S)-dihydroorotate from bicarbonate: step 1/3. In terms of biological role, large subunit of the glutamine-dependent carbamoyl phosphate synthetase (CPSase). CPSase catalyzes the formation of carbamoyl phosphate from the ammonia moiety of glutamine, carbonate, and phosphate donated by ATP, constituting the first step of 2 biosynthetic pathways, one leading to arginine and/or urea and the other to pyrimidine nucleotides. The large subunit (synthetase) binds the substrates ammonia (free or transferred from glutamine from the small subunit), hydrogencarbonate and ATP and carries out an ATP-coupled ligase reaction, activating hydrogencarbonate by forming carboxy phosphate which reacts with ammonia to form carbamoyl phosphate. This is Carbamoyl phosphate synthase large chain from Methanobrevibacter smithii (strain ATCC 35061 / DSM 861 / OCM 144 / PS).